Reading from the N-terminus, the 140-residue chain is uncharacterized protein (140 aa).

Belongs to the asfivirus D129L family.

This is an uncharacterized protein from African swine fever virus (isolate Pig/Kenya/KEN-50/1950) (ASFV).